A 116-amino-acid polypeptide reads, in one-letter code: Large ribosomal subunit protein bL20 (116 aa).

This sequence belongs to the bacterial ribosomal protein bL20 family.

Functionally, binds directly to 23S ribosomal RNA and is necessary for the in vitro assembly process of the 50S ribosomal subunit. It is not involved in the protein synthesizing functions of that subunit. The polypeptide is Large ribosomal subunit protein bL20 (Nitratiruptor sp. (strain SB155-2)).